The primary structure comprises 328 residues: Stress response kinase A (328 aa).

Aspartate 201 functions as the Proton acceptor in the catalytic mechanism. Asparagine 206 and aspartate 217 together coordinate Mg(2+). The active site involves aspartate 217.

It belongs to the SrkA/RdoA protein kinase family. As to quaternary structure, monomer. It depends on Mg(2+) as a cofactor.

The protein resides in the cytoplasm. It carries out the reaction L-seryl-[protein] + ATP = O-phospho-L-seryl-[protein] + ADP + H(+). The catalysed reaction is L-threonyl-[protein] + ATP = O-phospho-L-threonyl-[protein] + ADP + H(+). Its function is as follows. A protein kinase that phosphorylates Ser and Thr residues. Probably acts to suppress the effects of stress linked to accumulation of reactive oxygen species. Probably involved in the extracytoplasmic stress response. The sequence is that of Stress response kinase A from Salmonella paratyphi A (strain ATCC 9150 / SARB42).